The chain runs to 261 residues: Glucose 1-dehydrogenase 1 (261 aa).

Valine 11–valine 35 provides a ligand contact to NADP(+). Serine 145 lines the substrate pocket. The active-site Proton acceptor is the tyrosine 158.

Belongs to the short-chain dehydrogenases/reductases (SDR) family. In terms of assembly, homotetramer.

It catalyses the reaction D-glucose + NAD(+) = D-glucono-1,5-lactone + NADH + H(+). It carries out the reaction D-glucose + NADP(+) = D-glucono-1,5-lactone + NADPH + H(+). Functionally, may play some role in spore germination. The protein is Glucose 1-dehydrogenase 1 (gdhI) of Priestia megaterium (Bacillus megaterium).